The following is a 2253-amino-acid chain: Genome polyprotein (2253 aa).

Cysteine 627 and cysteine 694 are disulfide-bonded. The Cell attachment site motif lies at 750-752 (RVD). Positions 825–920 (LVYKNRGFYK…LFPGRKEITQ (96 aa)) constitute an LRAT domain. Catalysis depends on for protein 2A H-NC residues histidine 835 and histidine 846. Residue cysteine 904 is the For protein 2A H-NC; Acyl-thioester intermediate of the active site. A helical transmembrane segment spans residues 1002–1022 (IVLYCHAPNMLTTMCLGTLLV). An SF3 helicase domain is found at 1205-1366 (YSEMMRVNVR…ASYSRNNKLD (162 aa)). Tyrosine 1559 bears the O-(5'-phospho-RNA)-tyrosine mark. The 190-residue stretch at 1586-1775 (APYMQDLEHC…RAAAVHFISN (190 aa)) folds into the Peptidase C3 domain. Catalysis depends on for protease 3C activity residues histidine 1626, aspartate 1664, and cysteine 1739. Cysteine 1970 acts as the Acyl-thioester intermediate in catalysis. The RdRp catalytic domain occupies 2018 to 2132 (PYNYGLDYSS…SVSSPLDAEY (115 aa)). Positions 2024 and 2118 each coordinate Mg(2+).

It belongs to the picornaviruses polyprotein family. Interacts with capsid protein VP1 and capsid protein VP3 to form heterotrimeric protomers. Five protomers subsequently associate to form pentamers which serve as building blocks for the capsid. As to quaternary structure, interacts with capsid protein VP0, and capsid protein VP3 to form heterotrimeric protomers. Five protomers subsequently associate to form pentamers which serve as building blocks for the capsid. In terms of assembly, interacts with capsid protein VP0 and capsid protein VP1 to form heterotrimeric protomers. Five protomers subsequently associate to form pentamers which serve as building blocks for the capsid. Homohexamer; forms a hexameric ring structure with 6-fold symmetry characteristic of AAA+ ATPases. As to quaternary structure, homodimer. Interacts with host ACBD3. In terms of assembly, interacts with RNA-directed RNA polymerase. Interacts with Viral protein genome-linked. The cofactor is Mg(2+). Post-translationally, VPg is uridylylated by the polymerase and is covalently linked to the 5'-end of genomic RNA. This uridylylated form acts as a nucleotide-peptide primer for the polymerase. Specific enzymatic cleavages yield mature proteins. All cleavages are catalyzed by P3C.

The protein resides in the virion. Its subcellular location is the host cytoplasm. It is found in the host nucleus. It localises to the host nucleolus. The protein localises to the host cytoplasmic vesicle membrane. The protein resides in the host endoplasmic reticulum membrane. Its subcellular location is the host Golgi apparatus membrane. The enzyme catalyses RNA(n) + a ribonucleoside 5'-triphosphate = RNA(n+1) + diphosphate. The catalysed reaction is a ribonucleoside 5'-triphosphate + H2O = a ribonucleoside 5'-diphosphate + phosphate + H(+). It carries out the reaction Selective cleavage of Gln-|-Gly bond in the poliovirus polyprotein. In other picornavirus reactions Glu may be substituted for Gln, and Ser or Thr for Gly.. In terms of biological role, forms an icosahedral capsid of pseudo T=3 symmetry together with capsid proteins VP1 and VP3. The capsid is 300 Angstroms in diameter, composed of 60 copies of each capsid protein and enclosing the viral positive strand RNA genome. The attachment to the host cell receptor induces virion internalization predominantly through clathrin-mediated endocytosis. Binds packaging signals present in the viral RNA. Its function is as follows. Forms an icosahedral capsid of pseudo T=3 symmetry together with capsid proteins VP0 and VP1. The capsid is 300 Angstroms in diameter, composed of 60 copies of each capsid protein and enclosing the viral positive strand RNA genome. The attachment to the host cell receptor induces virion internalization predominantly through clathrin-mediated endocytosis. Binds packaging signals present in the viral RNA. Functionally, forms an icosahedral capsid of pseudo T=3 symmetry together with capsid proteins VP0 and VP3. The capsid is 300 Angstroms in diameter, composed of 60 copies of each capsid protein and enclosing the viral positive strand RNA genome. The attachment to the host cell receptor induces virion internalization predominantly through clathrin-mediated endocytosis. Binds packaging signals present in the viral RNA. Mediates self-processing of the polyprotein by a translational effect termed 'ribosome skipping'. Mechanistically, 2A1-mediated cleavage occurs between the C-terminal glycine and the proline of the downstream protein 2A2. In terms of biological role, plays an essential role in the virus replication cycle by acting as a viroporin. Creates a pore in the host endoplasmic reticulum and as a consequence releases Ca2+ in the cytoplasm of infected cell. In turn, high levels of cytoplasmic calcium may trigger membrane trafficking and transport of viral ER-associated proteins to viroplasms, sites of viral genome replication. Its function is as follows. Induces and associates with structural rearrangements of intracellular membranes. Displays RNA-binding, nucleotide binding and NTPase activities. May play a role in virion morphogenesis and viral RNA encapsidation by interacting with the capsid protein VP3. Functionally, localizes the viral replication complex to the surface of membranous vesicles. It inhibits host cell endoplasmic reticulum-to-Golgi apparatus transport and causes the disassembly of the Golgi complex, possibly through GBF1 interaction. This would result in depletion of MHC, trail receptors and IFN receptors at the host cell surface. Plays an essential role in viral RNA replication by recruiting ACBD3 and PI4KB at the viral replication sites, thereby allowing the formation of the rearranged membranous structures where viral replication takes place. Acts as a primer for viral RNA replication and remains covalently bound to viral genomic RNA. VPg is uridylylated prior to priming replication into VPg-pUpU. The VPg-pUpU is then used as primer on the genomic RNA poly(A) by the RNA-dependent RNA polymerase to replicate the viral genome. Following genome release from the infecting virion in the cytoplasm, the VPg-RNA linkage is probably removed by host TDP2. During the late stage of the replication cycle, host TDP2 is excluded from sites of viral RNA synthesis and encapsidation, allowing for the generation of progeny virions. In terms of biological role, cysteine protease that generates mature viral proteins from the precursor polyprotein. In addition to its proteolytic activity, it binds to viral RNA, and thus influences viral genome replication. RNA and substrate bind cooperatively to the protease. Its function is as follows. Replicates the viral genomic RNA on the surface of intracellular membranes. Covalently attaches UMP to a tyrosine of VPg, which is used to prime RNA synthesis. The positive stranded RNA genome is first replicated at virus induced membranous vesicles, creating a dsRNA genomic replication form. This dsRNA is then used as template to synthesize positive stranded RNA genomes. ss(+)RNA genomes are either translated, replicated or encapsidated. The polypeptide is Genome polyprotein (Ljunganvirus 1 (LV)).